We begin with the raw amino-acid sequence, 171 residues long: UPF0398 protein M28_Spy1394 (171 aa).

Belongs to the UPF0398 family.

The polypeptide is UPF0398 protein M28_Spy1394 (Streptococcus pyogenes serotype M28 (strain MGAS6180)).